We begin with the raw amino-acid sequence, 46 residues long: Toxin Up-1 (46 aa).

The protein localises to the secreted. Its subcellular location is the nematocyst. The protein resides in the target cell membrane. Functionally, this toxin is a potent hemolysin devoid of enzymatic activity. Its hemolytic activity is inhibited by sphingomyelin but not by cholesterol. In erythrocyte membranes, it causes numerous cell membrane ruptures. It also exerces cytotoxicity to different cell lines. It exerces a positive inotropic effect. Also causes hemorrhage and necrosis by dilation of the blood vessels in the skin, and vascular leakage of fluids and rupture of alveolar walls of the lungs. Is a potent ichtyotoxin. May act as a pore-forming toxin. This is Toxin Up-1 from Urticina piscivora (Fish-eating sea anemone).